The primary structure comprises 155 residues: Small ribosomal subunit protein uS7cz/uS7cy (155 aa).

Belongs to the universal ribosomal protein uS7 family. As to quaternary structure, part of the 30S ribosomal subunit.

Its subcellular location is the plastid. It is found in the chloroplast. Its function is as follows. One of the primary rRNA binding proteins, it binds directly to 16S rRNA where it nucleates assembly of the head domain of the 30S subunit. The polypeptide is Small ribosomal subunit protein uS7cz/uS7cy (rps7-A) (Amborella trichopoda).